A 756-amino-acid chain; its full sequence is U3 small nucleolar RNA-associated protein 25 homolog (756 aa).

The segment at 1–159 (MGKRGSRSQS…SQTSPEEFTD (159 aa)) is disordered. 2 promotes p53/TP53 degradation regions span residues 1 to 185 (MGKR…SLKA) and 573 to 635 (VQLP…KKEE). At Ser-10 the chain carries Phosphoserine. Over residues 25–43 (RDFGEEHPFYDRVSRKEAK) the composition is skewed to basic and acidic residues. 6 positions are modified to phosphoserine: Ser-50, Ser-52, Ser-58, Ser-60, Ser-62, and Ser-64. 2 stretches are compositionally biased toward acidic residues: residues 54-64 (DSSDSESDSES) and 84-121 (EEEEEDEEEEEEEDSIVDDAEMNDEDGGSDVSVEEEMA). The segment at 636 to 697 (LNFTHICEYT…YELPTYPHFY (62 aa)) is represses p53/TP53 degradation.

The protein belongs to the UTP25 family. As to quaternary structure, interacts with CAPN3; the interaction is required for CAPN3 translocation to the nucleolus. Post-translationally, phosphorylated. Phosphorylation is required to promote p53/TP53 degradation in the nucleolus which promotes cell cycle progression and liver development. As to expression, expressed in colon.

It localises to the nucleus. Its subcellular location is the nucleolus. Functionally, component of the ribosomal small subunit processome for the biogenesis of ribosomes, functions in pre-ribosomal RNA (pre-rRNA) processing. Essential for embryonic development in part through the regulation of p53 pathway. Controls the expansion growth of digestive organs and liver. Also involved in the sympathetic neuronal development. Mediates, with CAPN3, the proteasome-independent degradation of p53/TP53. The sequence is that of U3 small nucleolar RNA-associated protein 25 homolog from Homo sapiens (Human).